Reading from the N-terminus, the 433-residue chain is Mblk-1-related factor 1 (433 aa).

The 53-residue stretch at 145-197 (NKSNILRRNYTVEDLTQAVEDIRQGKLGTRRASVVYGIPRSTLRNKIYKLEAE) folds into the HTH psq-type 1 domain. Residues 173–193 (TRRASVVYGIPRSTLRNKIYK) constitute a DNA-binding region (H-T-H motif). Residues 235-254 (GNQSDSSSSSPHASMCPSSP) are compositionally biased toward low complexity. 2 disordered regions span residues 235 to 278 (GNQS…SCSP) and 304 to 338 (ANIS…PKRG). A compositionally biased stretch (polar residues) spans 304 to 319 (ANISNVDTHTPTPISE). Residues 320 to 332 (KSQKMHGNEEWKR) show a composition bias toward basic and acidic residues. The 53-residue stretch at 334-386 (RPKRGQYRKYDKNALDEAVRSVRRGEMTVHRAGSFFGVPHSTLEYKVKERNLM) folds into the HTH psq-type 2 domain. Positions 362–382 (VHRAGSFFGVPHSTLEYKVKE) form a DNA-binding region, H-T-H motif. A disordered region spans residues 393–433 (LYSHDSSTSEDGSQLVTSTISEKSDSSSHTSTPIPFPISLV). Residues 396–408 (HDSSTSEDGSQLV) show a composition bias toward polar residues. A compositionally biased stretch (low complexity) spans 409–424 (TSTISEKSDSSSHTST).

As to expression, expressed in AIM, RIC, AIZ, ADF, ADL, ASK, AWA, AUA, AIN, RIH (or RIR) and RIF head neurons and, in PVP, PVQ and DVA (or DVC) tail neurons, some intestinal cells, somatic gonad and vulva.

The protein localises to the nucleus. Its function is as follows. May act as transcription activator. Plays a role in neurogenesis by regulating neurite pruning between left and right AIM neurons and left and right RIF neurons during larval development. Regulates olfactory plasticity. The polypeptide is Mblk-1-related factor 1 (Caenorhabditis elegans).